A 199-amino-acid chain; its full sequence is Superoxide dismutase [Mn] 2 (199 aa).

Mn(2+)-binding residues include His28, His75, Asp157, and His161.

The protein belongs to the iron/manganese superoxide dismutase family. Mn(2+) serves as cofactor.

It carries out the reaction 2 superoxide + 2 H(+) = H2O2 + O2. Destroys superoxide anion radicals which are normally produced within the cells and which are toxic to biological systems. This chain is Superoxide dismutase [Mn] 2 (sod2), found in Haloferax volcanii (strain ATCC 29605 / DSM 3757 / JCM 8879 / NBRC 14742 / NCIMB 2012 / VKM B-1768 / DS2) (Halobacterium volcanii).